A 290-amino-acid polypeptide reads, in one-letter code: Agroclavine dehydrogenase (290 aa).

The protein belongs to the fgaFS/easG family. In terms of assembly, monomer.

The catalysed reaction is agroclavine + NADP(+) = didehydroagroclavine + NADPH + H(+). It functions in the pathway alkaloid biosynthesis; ergot alkaloid biosynthesis. In terms of biological role, agroclavine dehydrogenase; part of the gene cluster that mediates the biosynthesis of fungal ergot alkaloid. DmaW catalyzes the first step of ergot alkaloid biosynthesis by condensing dimethylallyl diphosphate (DMAP) and tryptophan to form 4-dimethylallyl-L-tryptophan. The second step is catalyzed by the methyltransferase easF that methylates 4-dimethylallyl-L-tryptophan in the presence of S-adenosyl-L-methionine, resulting in the formation of 4-dimethylallyl-L-abrine. The catalase easC and the FAD-dependent oxidoreductase easE then transform 4-dimethylallyl-L-abrine to chanoclavine-I which is further oxidized by easD in the presence of NAD(+), resulting in the formation of chanoclavine-I aldehyde. Agroclavine dehydrogenase easG then mediates the conversion of chanoclavine-I aldehyde to agroclavine via a non-enzymatic adduct reaction: the substrate is an iminium intermediate that is formed spontaneously from chanoclavine-I aldehyde in the presence of glutathione. The presence of easA is not required to complete this reaction. Further conversion of agroclavine to paspalic acid is a two-step process involving oxidation of agroclavine to elymoclavine and of elymoclavine to paspalic acid, the second step being performed by the elymoclavine oxidase cloA. Paspalic acid is then further converted to D-lysergic acid. Ergopeptines are assembled from D-lysergic acid and three different amino acids by the D-lysergyl-peptide-synthetases composed each of a monomudular and a trimodular nonribosomal peptide synthetase subunit. LpsB and lpsC encode the monomodular subunits responsible for D-lysergic acid activation and incorporation into the ergopeptine backbone. LpsA1 and A2 subunits encode the trimodular nonribosomal peptide synthetase assembling the tripeptide portion of ergopeptines. LpsA1 is responsible for formation of the major ergopeptine, ergotamine, and lpsA2 for alpha-ergocryptine, the minor ergopeptine of the total alkaloid mixture elaborated by C.purpurea. D-lysergyl-tripeptides are assembled by the nonribosomal peptide synthetases and released as N-(D-lysergyl-aminoacyl)-lactams. Cyclolization of the D-lysergyl-tripeptides is performed by the Fe(2+)/2-ketoglutarate-dependent dioxygenase easH which introduces a hydroxyl group into N-(D-lysergyl-aminoacyl)-lactam at alpha-C of the aminoacyl residue followed by spontaneous condensation with the terminal lactam carbonyl group. In Claviceps purpurea (Ergot fungus), this protein is Agroclavine dehydrogenase.